The primary structure comprises 303 residues: Small ribosomal subunit protein bS1m (303 aa).

Ser2 bears the N-acetylserine mark. The N-terminal 12 residues, 2 to 13 (SFAQILRGSRAM), are a transit peptide targeting the mitochondrion; not cleaved.

The protein belongs to the bacterial ribosomal protein bS1 family. In terms of assembly, component of the mitochondrial small ribosomal subunit (mt-SSU). Mature yeast 74S mitochondrial ribosomes consist of a small (37S) and a large (54S) subunit. The 37S small subunit contains a 15S ribosomal RNA (15S mt-rRNA) and at least 32 different proteins. The 54S large subunit contains a 21S rRNA (21S mt-rRNA) and at least 45 different proteins. This subunit is mutually exclusive with mug178/small ribosomal subunit protein L51-b.

It is found in the mitochondrion. Its function is as follows. Component of the mitochondrial ribosome (mitoribosome), a dedicated translation machinery responsible for the synthesis of mitochondrial genome-encoded proteins, including at least some of the essential transmembrane subunits of the mitochondrial respiratory chain. The mitoribosomes are attached to the mitochondrial inner membrane and translation products are cotranslationally integrated into the membrane. bS1m functionally interacts with the 5'-UTR of mitochondrial mRNAs. Plays an essential role in mitochondrial translation. The polypeptide is Small ribosomal subunit protein bS1m (mrp51) (Schizosaccharomyces pombe (strain 972 / ATCC 24843) (Fission yeast)).